Consider the following 615-residue polypeptide: TORTIFOLIA1-like protein 3 (615 aa).

5 HEAT repeats span residues 44-81 (GNLQ…SLPL), 86-123 (PFLS…RTTK), 125-163 (PFYS…SASD), 168-205 (RLGQ…AGGL), and 213-250 (GGLK…MERN). The disordered stretch occupies residues 288–446 (VPDLSEEVSP…HHVLSENPNS (159 aa)). A compositionally biased stretch (polar residues) spans 318–347 (RVGSTPAKSRTHLVNRSTPPGSSLATTARK). A compositionally biased stretch (basic and acidic residues) spans 391–406 (DEQHCDHDENAKETSH). A compositionally biased stretch (polar residues) spans 407–426 (SSHNTVQKLGGVSSSLNGNI). Position 456 is a phosphoserine (Ser-456).

The protein is TORTIFOLIA1-like protein 3 of Arabidopsis thaliana (Mouse-ear cress).